Reading from the N-terminus, the 162-residue chain is Caveolin-2 (162 aa).

The Cytoplasmic portion of the chain corresponds to 1-86 (MGLETEKADV…FEISKYVMYK (86 aa)). Tyr-19 is subject to Phosphotyrosine. 2 positions are modified to phosphoserine: Ser-20 and Ser-36. Residues 87-107 (FLTVFLAIPLAFVAGILFATL) constitute an intramembrane region (helical). Residues 108–162 (SCLHIWIIMPFVKTCLMVLPSVQTIWKSVTDVIIAPLCTSVGRSFSSISLQLSHD) lie on the Cytoplasmic side of the membrane.

Belongs to the caveolin family. As to quaternary structure, homodimer. Caveolin-1 and -2 colocalize and form a stable hetero-oligomeric complex.

It localises to the golgi apparatus membrane. Its subcellular location is the cell membrane. The protein resides in the membrane. It is found in the caveola. Functionally, may act as a scaffolding protein within caveolar membranes. Interacts directly with G-protein alpha subunits and can functionally regulate their activity. Caveolin-2 may function as an accessory protein in conjunction with caveolin-1. This is Caveolin-2 (CAV2) from Microcebus murinus (Gray mouse lemur).